The sequence spans 259 residues: uncharacterized protein (259 aa).

Positions 1 to 22 are cleaved as a signal peptide; the sequence is MKHSKKLLLCISFLLITFFISG. Cys23 is lipidated: N-palmitoyl cysteine. Cys23 carries S-diacylglycerol cysteine lipidation.

The protein belongs to the staphylococcal tandem lipoprotein family.

It localises to the cell membrane. This is an uncharacterized protein from Staphylococcus epidermidis (strain ATCC 35984 / DSM 28319 / BCRC 17069 / CCUG 31568 / BM 3577 / RP62A).